A 527-amino-acid chain; its full sequence is Peptide chain release factor 3 (527 aa).

The 268-residue stretch at 11–278 (AKRRTFAIIS…GFVEWAPAPL (268 aa)) folds into the tr-type G domain. Residues 20–27 (SHPDAGKT), 87–91 (DTPGH), and 141–144 (NKMD) each bind GTP.

The protein belongs to the TRAFAC class translation factor GTPase superfamily. Classic translation factor GTPase family. PrfC subfamily.

The protein resides in the cytoplasm. Increases the formation of ribosomal termination complexes and stimulates activities of RF-1 and RF-2. It binds guanine nucleotides and has strong preference for UGA stop codons. It may interact directly with the ribosome. The stimulation of RF-1 and RF-2 is significantly reduced by GTP and GDP, but not by GMP. In Teredinibacter turnerae (strain ATCC 39867 / T7901), this protein is Peptide chain release factor 3.